A 100-amino-acid polypeptide reads, in one-letter code: Transcription elongation factor A protein-like 7 (100 aa).

A compositionally biased stretch (basic and acidic residues) spans 1–32 (MQKPCKENEGKPKCSVPKREEKRPYGEFERQQ). The segment at 1–34 (MQKPCKENEGKPKCSVPKREEKRPYGEFERQQTE) is disordered. The stretch at 60 to 88 (EEMTREGDEMERCLEEIRGLRKKFRALHS) forms a coiled coil.

This sequence belongs to the TFS-II family. TFA subfamily. As to expression, highly expressed in normal and fetal brain tissues, and weakly expressed in uterus and ovary. Down-regulated in epithelial ovarian, cervical, prostate, breast, brain and lung cancer cell lines and in brain and ovarian tumors.

It is found in the nucleus. Functionally, plays a role in the negative regulation of NF-kappa-B signaling at the basal level by modulating transcriptional activity of NF-kappa-B on its target gene promoters. Associates with cyclin D1 promoter containing Myc E-box sequence and transcriptionally represses cyclin D1 expression. Regulates telomerase reverse transcriptase expression and telomerase activity in both ALT (alternative lengthening of telomeres)and telomerase-positive cell lines. The polypeptide is Transcription elongation factor A protein-like 7 (TCEAL7) (Homo sapiens (Human)).